The following is a 430-amino-acid chain: Histidine--tRNA ligase (430 aa).

Belongs to the class-II aminoacyl-tRNA synthetase family. As to quaternary structure, homodimer.

The protein localises to the cytoplasm. It catalyses the reaction tRNA(His) + L-histidine + ATP = L-histidyl-tRNA(His) + AMP + diphosphate + H(+). This is Histidine--tRNA ligase from Synechococcus sp. (strain CC9902).